The following is a 59-amino-acid chain: Large ribosomal subunit protein bL32 (59 aa).

Positions 35-59 are disordered; the sequence is EAHLRHHISPNGYYRGRKVVKTKND. Basic residues predominate over residues 49–59; the sequence is RGRKVVKTKND.

The protein belongs to the bacterial ribosomal protein bL32 family.

The polypeptide is Large ribosomal subunit protein bL32 (Polynucleobacter asymbioticus (strain DSM 18221 / CIP 109841 / QLW-P1DMWA-1) (Polynucleobacter necessarius subsp. asymbioticus)).